Here is a 353-residue protein sequence, read N- to C-terminus: Paraneoplastic antigen Ma1 homolog (353 aa).

The protein belongs to the PNMA family. Predominantly expressed in testis. Very low levels in the brain, including in the piriform cortex, hippocampus and some subcortical nuclei.

It is found in the nucleus. It localises to the nucleolus. The chain is Paraneoplastic antigen Ma1 homolog (Pnma1) from Mus musculus (Mouse).